We begin with the raw amino-acid sequence, 213 residues long: N-(5'-phosphoribosyl)anthranilate isomerase (213 aa).

It belongs to the TrpF family.

It carries out the reaction N-(5-phospho-beta-D-ribosyl)anthranilate = 1-(2-carboxyphenylamino)-1-deoxy-D-ribulose 5-phosphate. It participates in amino-acid biosynthesis; L-tryptophan biosynthesis; L-tryptophan from chorismate: step 3/5. The polypeptide is N-(5'-phosphoribosyl)anthranilate isomerase (Leptospira interrogans serogroup Icterohaemorrhagiae serovar copenhageni (strain Fiocruz L1-130)).